A 66-amino-acid chain; its full sequence is Large ribosomal subunit protein uL30 (66 aa).

It belongs to the universal ribosomal protein uL30 family. As to quaternary structure, part of the 50S ribosomal subunit.

The polypeptide is Large ribosomal subunit protein uL30 (Brucella anthropi (strain ATCC 49188 / DSM 6882 / CCUG 24695 / JCM 21032 / LMG 3331 / NBRC 15819 / NCTC 12168 / Alc 37) (Ochrobactrum anthropi)).